The primary structure comprises 123 residues: Large ribosomal subunit protein bL12 (123 aa).

It belongs to the bacterial ribosomal protein bL12 family. As to quaternary structure, homodimer. Part of the ribosomal stalk of the 50S ribosomal subunit. Forms a multimeric L10(L12)X complex, where L10 forms an elongated spine to which 2 to 4 L12 dimers bind in a sequential fashion. Binds GTP-bound translation factors.

In terms of biological role, forms part of the ribosomal stalk which helps the ribosome interact with GTP-bound translation factors. Is thus essential for accurate translation. This chain is Large ribosomal subunit protein bL12, found in Rhodopseudomonas palustris (strain BisB18).